Reading from the N-terminus, the 478-residue chain is Stromelysin-1 (478 aa).

The first 17 residues, 1 to 17 (MKTLPTLLLLCVALCSA), serve as a signal peptide directing secretion. Residues 18 to 100 (YPLDGASRDA…PRCGVPDVGH (83 aa)) constitute a propeptide, activation peptide. The Cysteine switch signature appears at 91 to 98 (PRCGVPDV). C93 contacts Zn(2+). Residues D125 and D159 each coordinate Ca(2+). Positions 169 and 171 each coordinate Zn(2+). Residues D176, G177, G179, and V181 each contribute to the Ca(2+) site. H184 contacts Zn(2+). Positions 191, 193, and 195 each coordinate Ca(2+). H197 contributes to the Zn(2+) binding site. Positions 199, 200, and 202 each coordinate Ca(2+). H219 provides a ligand contact to Zn(2+). Residue E220 is part of the active site. The Zn(2+) site is built by H223 and H229. 4 Hemopexin repeats span residues 288 to 337 (PVMC…WPSL), 338 to 384 (PSAV…GFPS), 386 to 434 (IRKI…FPGI), and 435 to 478 (NPKI…WFQC). A disulfide bridge connects residues C291 and C478. A Ca(2+)-binding site is contributed by D298. Residues D390 and D439 each coordinate Ca(2+).

The protein belongs to the peptidase M10A family. It depends on Ca(2+) as a cofactor. The cofactor is Zn(2+).

It localises to the secreted. The protein localises to the extracellular space. The protein resides in the extracellular matrix. It catalyses the reaction Preferential cleavage where P1', P2' and P3' are hydrophobic residues.. In terms of biological role, metalloproteinase with a rather broad substrate specificity that can degrade fibronectin, laminin, gelatins of type I, III, IV, and V; collagens III, IV, X, and IX, and cartilage proteoglycans. Activates different molecules including growth factors, plasminogen or other matrix metalloproteinases such as MMP9. Once released into the extracellular matrix (ECM), the inactive pro-enzyme is activated by the plasmin cascade signaling pathway. Also acts intracellularly. For example, in dopaminergic neurons, gets activated by the serine protease HTRA2 upon stress and plays a pivotal role in DA neuronal degeneration by mediating microglial activation and alpha-synuclein/SNCA cleavage. In addition, plays a role in immune response and possesses antiviral activity against various viruses. Mechanistically, translocates from the cytoplasm into the cell nucleus upon virus infection to influence NF-kappa-B activities. The protein is Stromelysin-1 (MMP3) of Oryctolagus cuniculus (Rabbit).